Here is a 471-residue protein sequence, read N- to C-terminus: Uronate isomerase (471 aa).

Belongs to the metallo-dependent hydrolases superfamily. Uronate isomerase family.

The enzyme catalyses D-glucuronate = D-fructuronate. It catalyses the reaction aldehydo-D-galacturonate = keto-D-tagaturonate. It participates in carbohydrate metabolism; pentose and glucuronate interconversion. The chain is Uronate isomerase from Cellvibrio japonicus (strain Ueda107) (Pseudomonas fluorescens subsp. cellulosa).